The following is a 289-amino-acid chain: 2-dehydro-3-deoxyphosphooctonate aldolase (289 aa).

This sequence belongs to the KdsA family.

The protein resides in the cytoplasm. It catalyses the reaction D-arabinose 5-phosphate + phosphoenolpyruvate + H2O = 3-deoxy-alpha-D-manno-2-octulosonate-8-phosphate + phosphate. Its pathway is carbohydrate biosynthesis; 3-deoxy-D-manno-octulosonate biosynthesis; 3-deoxy-D-manno-octulosonate from D-ribulose 5-phosphate: step 2/3. It participates in bacterial outer membrane biogenesis; lipopolysaccharide biosynthesis. The protein is 2-dehydro-3-deoxyphosphooctonate aldolase of Cupriavidus necator (strain ATCC 17699 / DSM 428 / KCTC 22496 / NCIMB 10442 / H16 / Stanier 337) (Ralstonia eutropha).